The sequence spans 1048 residues: 3-hydroxy-3-methylglutaryl-coenzyme A reductase (1048 aa).

The Cytoplasmic segment spans residues Met1 to Pro32. The helical transmembrane segment at Ile33 to Gly53 threads the bilayer. Topologically, residues Thr54 to Thr220 are lumenal. The chain crosses the membrane as a helical span at residues Val221–Phe241. An SSD domain is found at Asp222–Val403. The Cytoplasmic portion of the chain corresponds to Arg242 to Arg250. Residues Phe251–Ile271 form a helical membrane-spanning segment. Residues Thr272–Asp276 lie on the Lumenal side of the membrane. A helical transmembrane segment spans residues Val277–Phe297. Topologically, residues Glu298–Glu348 are cytoplasmic. A helical transmembrane segment spans residues Gly349 to Leu369. Residues Arg370 to His377 are Lumenal-facing. The chain crosses the membrane as a helical span at residues Phe378 to Ala398. Topologically, residues Thr399 to Trp439 are cytoplasmic. A helical membrane pass occupies residues Trp440–Phe460. At Tyr461–Arg542 the chain is on the lumenal side. N-linked (GlcNAc...) asparagine glycans are attached at residues Asn470 and Asn520. A helical membrane pass occupies residues Leu543 to Ala563. At Arg564 to Lys1048 the chain is on the cytoplasmic side. Glu729 acts as the Charge relay system in catalysis. A CoA-binding site is contributed by Ser735–Lys741. NADP(+) contacts are provided by residues Ser796–Phe798 and Asp823–Ser831. Lys863 acts as the Charge relay system in catalysis. Residue Val892–Lys894 participates in CoA binding. Residue Asp939 is the Charge relay system of the active site. Ala1034–His1035 lines the CoA pocket. His1035 acts as the Proton donor in catalysis. NADP(+) is bound at residue Asn1039–Arg1040.

Belongs to the HMG-CoA reductase family.

The protein localises to the endoplasmic reticulum membrane. The enzyme catalyses (R)-mevalonate + 2 NADP(+) + CoA = (3S)-3-hydroxy-3-methylglutaryl-CoA + 2 NADPH + 2 H(+). It functions in the pathway metabolic intermediate biosynthesis; (R)-mevalonate biosynthesis; (R)-mevalonate from acetyl-CoA: step 3/3. Functionally, HMG-CoA reductase; part of the first module of ergosterol biosynthesis pathway that includes the early steps of the pathway, conserved across all eukaryotes, and which results in the formation of mevalonate from acetyl-coenzyme A (acetyl-CoA). In this module, the cytosolic acetyl-CoA acetyltransferase catalyzes the formation of acetoacetyl-CoA. The hydroxymethylglutaryl-CoA synthase then condenses acetyl-CoA with acetoacetyl-CoA to form HMG-CoA. The rate-limiting step of the early module is the reduction to mevalonate by the 3-hydroxy-3-methylglutaryl-coenzyme A (HMG-CoA) reductase. This chain is 3-hydroxy-3-methylglutaryl-coenzyme A reductase, found in Aspergillus terreus.